The following is a 55-amino-acid chain: Large ribosomal subunit protein bL33 (55 aa).

Belongs to the bacterial ribosomal protein bL33 family.

The protein is Large ribosomal subunit protein bL33 of Bartonella henselae (strain ATCC 49882 / DSM 28221 / CCUG 30454 / Houston 1) (Rochalimaea henselae).